A 333-amino-acid chain; its full sequence is Homeobox protein Hox-D13 (333 aa).

Residues Met-1–Val-24 form a disordered region. A compositionally biased stretch (low complexity) spans Gly-12–Val-24. Positions Gly-266–Val-325 form a DNA-binding region, homeobox.

Belongs to the Abd-B homeobox family.

The protein localises to the nucleus. Its function is as follows. Sequence-specific transcription factor that binds gene promoters and activates their transcription. Part of a developmental regulatory system that provides cells with specific positional identities on the anterior-posterior axis. The protein is Homeobox protein Hox-D13 (HOXD13) of Carollia perspicillata (Seba's short-tailed bat).